A 94-amino-acid polypeptide reads, in one-letter code: Large ribosomal subunit protein uL23 (94 aa).

Belongs to the universal ribosomal protein uL23 family. Part of the 50S ribosomal subunit. Contacts protein L29, and trigger factor when it is bound to the ribosome.

Functionally, one of the early assembly proteins it binds 23S rRNA. One of the proteins that surrounds the polypeptide exit tunnel on the outside of the ribosome. Forms the main docking site for trigger factor binding to the ribosome. This chain is Large ribosomal subunit protein uL23, found in Mycoplasma mycoides subsp. mycoides SC (strain CCUG 32753 / NCTC 10114 / PG1).